We begin with the raw amino-acid sequence, 202 residues long: Prephenate decarboxylase (202 aa).

Belongs to the prephenate decarboxylase family.

The enzyme catalyses prephenate + H(+) = 3-[(4R)-4-hydroxycyclohexa-1,5-dien-1-yl]-2-oxopropanoate + CO2. Its function is as follows. In vivo, involved in the biosynthesis of 2-carboxy-6-hydroxyoctahydroindole (Choi) present in the nonribosomal glycopeptides aeruginoside 126A and B. AerD is an unusual prephenate decarboxylase that avoids the typical aromatization of the cyclohexadienol ring of prephenate. AerD catalyzes the protonation at C8 followed by decarboxylation to produce the dihydro-4-hydroxyphenylpyruvate regioisomer A258 (H2HPP A258)(3-(4-hydroxycyclohexa- 1,5-dienyl)-2-oxopropanoic acid), which is able to undergo a nonenzymatic isomerization to produce dihydro-4-hydroxyphenylpyruvate regioisomer A295 (H2HPP A295)(3-(4-hydroxycyclohex-2-enylidene)-2-oxopropanoic acid). The polypeptide is Prephenate decarboxylase (Planktothrix agardhii (strain NIVA-CYA 126/8)).